Here is a 913-residue protein sequence, read N- to C-terminus: Translation initiation factor IF-2 (913 aa).

The tract at residues 1–322 (MTDNNDDKTL…QEKFRRSQMQ (322 aa)) is disordered. Residues 60–113 (VQPVVAAPKPAAPAPVAARPQAPQPRIHQPGGQQQRPGSSQSQQRSGSSAPQQR) show a composition bias toward low complexity. The span at 131–180 (MEARRRALMEAQARDVVEAKQRAEDEARRKVEEEQRIAAEKMEAANRAAE) shows a compositional bias: basic and acidic residues. 3 stretches are compositionally biased toward low complexity: residues 181-195 (EAAA…PAAE), 203-238 (ERPA…AAAP), and 261-277 (PARG…PAAR). The region spanning 411-578 (SRPPVVTIMG…AILLQAEILD (168 aa)) is the tr-type G domain. The interval 420–427 (GHVDHGKT) is G1. 420 to 427 (GHVDHGKT) lines the GTP pocket. The tract at residues 445 to 449 (GITQH) is G2. The segment at 466-469 (DTPG) is G3. Residues 466-470 (DTPGH) and 520-523 (NKID) contribute to the GTP site. Residues 520–523 (NKID) form a G4 region. The tract at residues 556–558 (SAK) is G5.

It belongs to the TRAFAC class translation factor GTPase superfamily. Classic translation factor GTPase family. IF-2 subfamily.

Its subcellular location is the cytoplasm. Its function is as follows. One of the essential components for the initiation of protein synthesis. Protects formylmethionyl-tRNA from spontaneous hydrolysis and promotes its binding to the 30S ribosomal subunits. Also involved in the hydrolysis of GTP during the formation of the 70S ribosomal complex. In Agrobacterium fabrum (strain C58 / ATCC 33970) (Agrobacterium tumefaciens (strain C58)), this protein is Translation initiation factor IF-2.